The primary structure comprises 283 residues: Cardiolipin synthase (CMP-forming) (283 aa).

The next 3 membrane-spanning stretches (helical) occupy residues 83-103 (PFIG…LFAF), 155-175 (VSIA…ALFI), and 209-229 (LSKW…LLLL).

This sequence belongs to the CDP-alcohol phosphatidyltransferase class-I family. In terms of assembly, may be found in a large complex. Mg(2+) serves as cofactor.

It is found in the mitochondrion inner membrane. The enzyme catalyses a CDP-1,2-diacyl-sn-glycerol + a 1,2-diacyl-sn-glycero-3-phospho-(1'-sn-glycerol) = a cardiolipin + CMP + H(+). Functionally, catalyzes the synthesis of cardiolipin (CL) (diphosphatidylglycerol) by specifically transferring a phosphatidyl group from CDP-diacylglycerol to phosphatidylglycerol (PG). CL is a key phospholipid in mitochondrial membranes and plays important roles in maintaining the functional integrity and dynamics of mitochondria under both optimal and stress conditions. This is Cardiolipin synthase (CMP-forming) (CRD1) from Saccharomyces cerevisiae (strain ATCC 204508 / S288c) (Baker's yeast).